The chain runs to 246 residues: Glutamate/aspartate import permease protein GltJ (246 aa).

The region spanning 29–230 (FQVTIALSIC…LINAFIMLVM (202 aa)) is the ABC transmembrane type-1 domain. 5 consecutive transmembrane segments (helical) span residues 33–53 (IALS…FGIL), 74–94 (NVPL…LLPE), 104–124 (LDPN…FTAA), 179–196 (LVKN…DMAA), and 212–232 (FTAI…VMTL).

It belongs to the binding-protein-dependent transport system permease family. HisMQ subfamily. In terms of assembly, the complex is composed of two ATP-binding proteins (GltL), two transmembrane proteins (GltJ and GltK) and a solute-binding protein (GltI).

It is found in the cell inner membrane. Functionally, part of the ABC transporter complex GltIJKL involved in glutamate and aspartate uptake. Probably responsible for the translocation of the substrate across the membrane. The sequence is that of Glutamate/aspartate import permease protein GltJ (gltJ) from Escherichia coli O6:H1 (strain CFT073 / ATCC 700928 / UPEC).